Here is a 247-residue protein sequence, read N- to C-terminus: UDP-2,3-diacylglucosamine hydrolase (247 aa).

The Mn(2+) site is built by Asp-8, His-10, Asp-41, Asn-79, and His-115. A substrate-binding site is contributed by 79-80; it reads NH. Substrate is bound by residues Asp-123, Lys-165, Lys-168, and His-196. Residues His-196 and His-198 each coordinate Mn(2+).

Belongs to the LpxH family. The cofactor is Mn(2+).

The protein resides in the cell inner membrane. It carries out the reaction UDP-2-N,3-O-bis[(3R)-3-hydroxytetradecanoyl]-alpha-D-glucosamine + H2O = 2-N,3-O-bis[(3R)-3-hydroxytetradecanoyl]-alpha-D-glucosaminyl 1-phosphate + UMP + 2 H(+). Its pathway is glycolipid biosynthesis; lipid IV(A) biosynthesis; lipid IV(A) from (3R)-3-hydroxytetradecanoyl-[acyl-carrier-protein] and UDP-N-acetyl-alpha-D-glucosamine: step 4/6. Hydrolyzes the pyrophosphate bond of UDP-2,3-diacylglucosamine to yield 2,3-diacylglucosamine 1-phosphate (lipid X) and UMP by catalyzing the attack of water at the alpha-P atom. Involved in the biosynthesis of lipid A, a phosphorylated glycolipid that anchors the lipopolysaccharide to the outer membrane of the cell. The protein is UDP-2,3-diacylglucosamine hydrolase of Blochmanniella floridana.